The following is a 732-amino-acid chain: Integrator complex subunit 13 (732 aa).

The span at 564–648 shows a compositional bias: basic and acidic residues; that stretch reads PPEEEERKKR…DETPHMEKSK (85 aa). The disordered stretch occupies residues 564–650; sequence PPEEEERKKR…TPHMEKSKGP (87 aa). Positions 572–582 match the Nuclear localization signal (NLS) motif; it reads KRGRKREDRED. A Glycyl lysine isopeptide (Lys-Gly) (interchain with G-Cter in SUMO2) cross-link involves residue lysine 611. Phosphoserine is present on residues serine 623, serine 626, and serine 678. Residues 649–694 form a cleavage module binding motif (CMBM) region; that stretch reads GPVSLLSLWSNRINTANSRKHQEFAGRLNSVNNRAELYQHLKEENG.

This sequence belongs to the Integrator subunit 13 family. Component of the Integrator complex, composed of core subunits INTS1, INTS2, INTS3, INTS4, INTS5, INTS6, INTS7, INTS8, INTS9/RC74, INTS10, INTS11/CPSF3L, INTS12, INTS13, INTS14 and INTS15. The core complex associates with protein phosphatase 2A subunits PPP2CA and PPP2R1A, to form the Integrator-PP2A (INTAC) complex. INTS13 is part of the tail subcomplex, composed of INTS10, INTS13, INTS14 and INTS15. Interacts with transcription factors ZNF609 and ZNF655. Interacts with PAFAH1B1; this interaction may be required for proper recruitment of dynein complexes to the nuclear envelope at prophase.

Its subcellular location is the nucleus. It localises to the cytoplasm. Functionally, component of the integrator complex, a multiprotein complex that terminates RNA polymerase II (Pol II) transcription in the promoter-proximal region of genes. The integrator complex provides a quality checkpoint during transcription elongation by driving premature transcription termination of transcripts that are unfavorably configured for transcriptional elongation: the complex terminates transcription by (1) catalyzing dephosphorylation of the C-terminal domain (CTD) of Pol II subunit POLR2A/RPB1 and SUPT5H/SPT5, (2) degrading the exiting nascent RNA transcript via endonuclease activity and (3) promoting the release of Pol II from bound DNA. The integrator complex is also involved in terminating the synthesis of non-coding Pol II transcripts, such as enhancer RNAs (eRNAs), small nuclear RNAs (snRNAs), telomerase RNAs and long non-coding RNAs (lncRNAs). Within the integrator complex, INTS13 is part of the integrator tail module and acts as a platform for the recruitment of transcription factors at promoters. At prophase, mediates recruitment of cytoplasmic dynein to the nuclear envelope, a step important for proper centrosome-nucleus coupling. At G2/M phase, may be required for proper spindle formation and execution of cytokinesis. The polypeptide is Integrator complex subunit 13 (Mus musculus (Mouse)).